The following is a 287-amino-acid chain: 33 kDa chaperonin (287 aa).

2 disulfides stabilise this stretch: Cys-233–Cys-235 and Cys-266–Cys-269.

Belongs to the HSP33 family. Post-translationally, under oxidizing conditions two disulfide bonds are formed involving the reactive cysteines. Under reducing conditions zinc is bound to the reactive cysteines and the protein is inactive.

It localises to the cytoplasm. Functionally, redox regulated molecular chaperone. Protects both thermally unfolding and oxidatively damaged proteins from irreversible aggregation. Plays an important role in the bacterial defense system toward oxidative stress. This is 33 kDa chaperonin from Thermodesulfovibrio yellowstonii (strain ATCC 51303 / DSM 11347 / YP87).